A 1553-amino-acid chain; its full sequence is Sodium channel protein PaFPC1 (1553 aa).

The interval Met-1 to Gln-68 is disordered. Topologically, residues Met-1–Pro-140 are cytoplasmic. A compositionally biased stretch (basic and acidic residues) spans Glu-34 to Ala-60. A helical membrane pass occupies residues Ile-141 to Met-159. Residues Pro-160–Thr-165 are Extracellular-facing. A helical transmembrane segment spans residues Tyr-166–Ala-186. The Cytoplasmic segment spans residues Arg-187–Pro-200. Residues Trp-201–Val-218 form a helical membrane-spanning segment. Topologically, residues Asp-219–Tyr-224 are extracellular. Residues Ala-225–Val-241 traverse the membrane as a helical segment. Residues Pro-242–Asp-260 lie on the Cytoplasmic side of the membrane. The chain crosses the membrane as a helical span at residues Leu-261–Tyr-280. The Extracellular portion of the chain corresponds to Met-281–Thr-360. Intrachain disulfides connect Cys-288–Cys-337 and Cys-328–Cys-343. Asn-300, Asn-308, Asn-312, and Asn-330 each carry an N-linked (GlcNAc...) asparagine glycan. An intramembrane region (pore-forming) is located at residues Phe-361 to Leu-385. Residue Glu-378 participates in saxitoxin binding. The Extracellular portion of the chain corresponds to Arg-386–His-392. The helical transmembrane segment at Ile-393–Ala-413 threads the bilayer. At Val-414–Pro-519 the chain is on the cytoplasmic side. A helical membrane pass occupies residues Phe-520–Leu-538. Over Asp-539–Arg-549 the chain is Extracellular. A helical transmembrane segment spans residues Ile-550–Lys-569. Topologically, residues Ile-570 to Trp-583 are cytoplasmic. A helical transmembrane segment spans residues Asn-584–Val-603. Residues Gln-604–Gly-605 lie on the Extracellular side of the membrane. A helical transmembrane segment spans residues Leu-606–Phe-623. Topologically, residues Trp-624–Gly-639 are cytoplasmic. A helical membrane pass occupies residues Ala-640–Ile-658. Topologically, residues Gly-659–Asp-686 are extracellular. The N-linked (GlcNAc...) asparagine glycan is linked to Asn-683. The pore-forming intramembrane region spans Phe-687 to Trp-707. Tetrodotoxin contacts are provided by Glu-701 and Glu-704. Glu-704 serves as a coordination point for saxitoxin. Residues Asp-708–Pro-719 lie on the Extracellular side of the membrane. Cys-709 and Cys-717 are oxidised to a cystine. A helical membrane pass occupies residues Phe-720 to Leu-740. The Cytoplasmic portion of the chain corresponds to Leu-741–Tyr-857. A helical transmembrane segment spans residues Phe-858–Leu-875. Residues Glu-876–Asn-888 are Extracellular-facing. The chain crosses the membrane as a helical span at residues Ile-889 to Ile-907. Topologically, residues Met-908–Lys-921 are cytoplasmic. The chain crosses the membrane as a helical span at residues Trp-922 to Met-940. At Cys-941–Glu-945 the chain is on the extracellular side. Residues Ala-946 to Lys-964 form a helical membrane-spanning segment. Over Val-965–His-981 the chain is Cytoplasmic. Residues Ile-982–Val-1001 form a helical membrane-spanning segment. The Extracellular segment spans residues Gln-1002–Val-1047. Residues Cys-1011 and Cys-1030 are joined by a disulfide bond. N-linked (GlcNAc...) asparagine glycosylation occurs at Asn-1015. N-linked (GlcNAc...) asparagine; atypical glycosylation is present at Asn-1028. An N-linked (GlcNAc...) asparagine glycan is attached at Asn-1034. Residues Gly-1048–Asp-1069 constitute an intramembrane region (pore-forming). Gly-1062 provides a ligand contact to tetrodotoxin. Trp-1063 serves as a coordination point for saxitoxin. Topologically, residues Ala-1070–Ile-1086 are extracellular. A helical membrane pass occupies residues Tyr-1087–Val-1108. The Cytoplasmic segment spans residues Cys-1109–Lys-1171. Residues Gln-1133–Ala-1146 are linker region that may regulate channel inactivation. A helical transmembrane segment spans residues Phe-1172–Ile-1189. Residues Asp-1190–Glu-1200 lie on the Extracellular side of the membrane. The chain crosses the membrane as a helical span at residues Val-1201–Ile-1219. Over Lys-1220 to Asp-1231 the chain is Cytoplasmic. Residues Pro-1232–Met-1249 form a helical membrane-spanning segment. Over Leu-1250–Thr-1262 the chain is Extracellular. The chain crosses the membrane as a helical span at residues Leu-1263–Phe-1279. The Cytoplasmic portion of the chain corresponds to Gln-1280–Thr-1298. Residues Leu-1299–Phe-1316 form a helical membrane-spanning segment. Topologically, residues Gly-1317–Thr-1338 are extracellular. The pore-forming intramembrane region spans Phe-1339–Ala-1361. Tetrodotoxin is bound by residues Gly-1354 and Asp-1356. Asp-1356 is a binding site for saxitoxin. Topologically, residues Ile-1362–Gly-1387 are extracellular. A disulfide bridge links Cys-1368 with Cys-1381. A helical transmembrane segment spans residues Ile-1388–Ile-1410. Over Leu-1411–Asn-1553 the chain is Cytoplasmic.

Belongs to the sodium channel (TC 1.A.1.10) family. As to expression, detected in adult nerve cord, muscle, gut and mushroom-shaped accessory glands.

It is found in the cell membrane. With respect to regulation, inhibited by the pore blockers saxitoxin and tetrodotoxin. In terms of biological role, mediates the voltage-dependent sodium ion permeability of excitable membranes. The sequence is that of Sodium channel protein PaFPC1 from Periplaneta americana (American cockroach).